A 238-amino-acid polypeptide reads, in one-letter code: Ribonuclease 3 (238 aa).

The RNase III domain occupies 4–127; the sequence is IEEFEKRLGY…TMGAIYLETG (124 aa). Mg(2+) is bound at residue Glu40. Residue Asp44 is part of the active site. 2 residues coordinate Mg(2+): Asn113 and Glu116. Glu116 is a catalytic residue. The DRBM domain maps to 154–223; that stretch reads DYKTALQELT…ARIALEIFHR (70 aa).

Belongs to the ribonuclease III family. In terms of assembly, homodimer. Mg(2+) is required as a cofactor.

Its subcellular location is the cytoplasm. The enzyme catalyses Endonucleolytic cleavage to 5'-phosphomonoester.. Digests double-stranded RNA. Involved in the processing of primary rRNA transcript to yield the immediate precursors to the large and small rRNAs (23S and 16S). Processes some mRNAs, and tRNAs when they are encoded in the rRNA operon. Processes pre-crRNA and tracrRNA of type II CRISPR loci if present in the organism. The protein is Ribonuclease 3 of Wolinella succinogenes (strain ATCC 29543 / DSM 1740 / CCUG 13145 / JCM 31913 / LMG 7466 / NCTC 11488 / FDC 602W) (Vibrio succinogenes).